The primary structure comprises 280 residues: 3-hydroxyacyl-thioester dehydratase X (280 aa).

The interval 149–170 (QRTSLSGEPKPPPQKKPKLPPP) is disordered. Positions 162–256 (QKKPKLPPPA…TAGLYVAEGD (95 aa)) constitute a MaoC-like domain.

It belongs to the enoyl-CoA hydratase/isomerase family.

The catalysed reaction is a (3R)-3-hydroxyacyl-CoA = a (2E)-enoyl-CoA + H2O. It catalyses the reaction (2E)-octenoyl-CoA + H2O = (3R)-hydroxyoctanoyl-CoA. It carries out the reaction (3R)-3-hydroxydodecanoyl-CoA = (2E)-dodecenoyl-CoA + H2O. The enzyme catalyses (3R)-hydroxyhexadecanoyl-CoA = (2E)-hexadecenoyl-CoA + H2O. The catalysed reaction is (3R)-hydroxyeicosanoyl-CoA = (2E)-eicosenoyl-CoA + H2O. It catalyses the reaction (3R)-3-hydroxybutanoyl-CoA = (2E)-butenoyl-CoA + H2O. Its function is as follows. Shows trans-enoyl-CoA hydratase/3-hydroxyacyl-CoA dehydratase activity. Displays a broad chain length specificity, with a predilection for the C8 to C12 substrates. This is 3-hydroxyacyl-thioester dehydratase X from Mycobacterium tuberculosis (strain ATCC 25618 / H37Rv).